A 134-amino-acid chain; its full sequence is Large ribosomal subunit protein bL20 (134 aa).

Belongs to the bacterial ribosomal protein bL20 family.

Functionally, binds directly to 23S ribosomal RNA and is necessary for the in vitro assembly process of the 50S ribosomal subunit. It is not involved in the protein synthesizing functions of that subunit. The polypeptide is Large ribosomal subunit protein bL20 (Sinorhizobium fredii (strain NBRC 101917 / NGR234)).